The following is a 471-amino-acid chain: Putative multidrug resistance protein MdtD (471 aa).

The Periplasmic segment spans residues 1–11 (MTDLPDSTRWQ). The chain crosses the membrane as a helical span at residues 12–32 (LWIVAFGFFMQSLDTTIVNTA). The Cytoplasmic portion of the chain corresponds to 33–48 (LPSMAQSLGESPLHMH). The helical transmembrane segment at 49–69 (MVIVSYVLTVAVMLPASGWLA) threads the bilayer. Over 70 to 76 (DKVGVRN) the chain is Periplasmic. Residues 77 to 97 (IFFTAIVLFTLGSLFCALSGT) form a helical membrane-spanning segment. Topologically, residues 98–101 (LNEL) are cytoplasmic. The chain crosses the membrane as a helical span at residues 102 to 124 (LLARALQGVGGAMMVPVGRLTVM). Residues 125-137 (KIVPREQYMAAMT) lie on the Periplasmic side of the membrane. Residues 138–158 (FVTLPGQVGPLLGPALGGLLV) form a helical membrane-spanning segment. Residues 159–164 (EYASWH) lie on the Cytoplasmic side of the membrane. Residues 165–185 (WIFLINIPVGIIGAIATLMLM) traverse the membrane as a helical segment. At 186 to 196 (PNYTMQTRRFD) the chain is on the periplasmic side. A helical transmembrane segment spans residues 197–217 (LSGFLLLAVGMAVLTLALDGS). Over 218 to 224 (KGTGFSP) the chain is Cytoplasmic. A helical membrane pass occupies residues 225–245 (LAIAGLVAVGVVALVLYLLHA). Over 246-262 (QNNNRALFSLKLFRTRT) the chain is Periplasmic. Residues 263-283 (FSLGLAGSFAGRIGSGMLPFM) traverse the membrane as a helical segment. Residues 284 to 285 (TP) are Cytoplasmic-facing. Residues 286–306 (VFLQIGLGFSPFHAGLMMIPM) traverse the membrane as a helical segment. Topologically, residues 307 to 341 (VLGSMGMKRIVVQVVNRFGYRRVLVATTLGLSLVT) are periplasmic. The chain crosses the membrane as a helical span at residues 342-362 (LLFMTTALLGWYYVLPFVLFL). Over 363 to 395 (QGMVNSTRFSSMNTLTLKDLPDNLASSGNSLLS) the chain is Cytoplasmic. A helical membrane pass occupies residues 396–416 (MIMQLSMSIGVTIAGLLLGLF). The Periplasmic portion of the chain corresponds to 417–430 (GSQHVSVDSGTTQT). The chain crosses the membrane as a helical span at residues 431–451 (VFMYTWLSMAFIIALPAFVFA). Residues 452–471 (RVPSDTHQNVAISRRKRSAQ) lie on the Cytoplasmic side of the membrane.

It belongs to the major facilitator superfamily. TCR/Tet family.

The protein localises to the cell inner membrane. The sequence is that of Putative multidrug resistance protein MdtD from Escherichia coli O45:K1 (strain S88 / ExPEC).